We begin with the raw amino-acid sequence, 477 residues long: Probable cytosolic Fe-S cluster assembly factor GG21400 (477 aa).

Positions 23, 68, 71, 74, 187, 243, 395, and 399 each coordinate [4Fe-4S] cluster.

This sequence belongs to the NARF family.

In terms of biological role, component of the cytosolic iron-sulfur (Fe/S) protein assembly machinery. Required for maturation of extramitochondrial Fe/S proteins. The sequence is that of Probable cytosolic Fe-S cluster assembly factor GG21400 from Drosophila erecta (Fruit fly).